The following is a 1265-amino-acid chain: Cohesin subunit SA-1 (1265 aa).

Positions 1 to 16 (MITSELSVLQDSTNES) are enriched in polar residues. 2 disordered regions span residues 1 to 21 (MITSELSVLQDSTNESAVMHT) and 37 to 91 (DLEV…EGDP). Over residues 62-73 (TPGDRSRAEPGS) the composition is skewed to basic and acidic residues. Positions 303-388 (FVHRYRDAIA…NRFKDRIVSM (86 aa)) constitute an SCD domain. 2 disordered regions span residues 1063-1097 (GDEDRLSVNSGGSNSKGSSVRSKKGRPPLHKKRVI) and 1111-1130 (DTIQTPGALTTPQLTSTVLR). A compositionally biased stretch (low complexity) spans 1069–1082 (SVNSGGSNSKGSSV). The segment covering 1083-1095 (RSKKGRPPLHKKR) has biased composition (basic residues). Residues 1111-1129 (DTIQTPGALTTPQLTSTVL) show a composition bias toward polar residues.

The protein belongs to the SCC3 family. Interacts directly with RAD21 in cohesin complex. Cohesin complexes are composed of a heterodimer between and SMC3, which are attached via their hinge domain, and RAD21 which link them at their heads, and one STAG protein (STAG1 OR STAG2). In cohesin complexes, STAG1 is mutually exclusive with STAG2. In terms of processing, phosphorylated by PLK1. The large dissociation of cohesin from chromosome arms during prophase is partly due to its phosphorylation.

It is found in the nucleus. Its subcellular location is the chromosome. The protein localises to the centromere. Its function is as follows. Component of cohesin complex, a complex required for the cohesion of sister chromatids after DNA replication. The cohesin complex apparently forms a large proteinaceous ring within which sister chromatids can be trapped. At anaphase, the complex is cleaved and dissociates from chromatin, allowing sister chromatids to segregate. The cohesin complex may also play a role in spindle pole assembly during mitosis. The protein is Cohesin subunit SA-1 (stag1) of Xenopus laevis (African clawed frog).